A 334-amino-acid polypeptide reads, in one-letter code: Ferrochelatase (334 aa).

Fe cation-binding residues include H207 and E288.

The protein belongs to the ferrochelatase family.

The protein resides in the cytoplasm. It carries out the reaction heme b + 2 H(+) = protoporphyrin IX + Fe(2+). Its pathway is porphyrin-containing compound metabolism; protoheme biosynthesis; protoheme from protoporphyrin-IX: step 1/1. Functionally, catalyzes the ferrous insertion into protoporphyrin IX. The protein is Ferrochelatase of Helicobacter pylori (strain ATCC 700392 / 26695) (Campylobacter pylori).